Consider the following 101-residue polypeptide: NADH-quinone oxidoreductase subunit K (101 aa).

The next 3 membrane-spanning stretches (helical) occupy residues 4-24 (LSDY…GIFV), 29-49 (IITL…NFVA), and 61-81 (IFVF…LAIL).

Belongs to the complex I subunit 4L family. As to quaternary structure, NDH-1 is composed of 14 different subunits. Subunits NuoA, H, J, K, L, M, N constitute the membrane sector of the complex.

Its subcellular location is the cell inner membrane. The catalysed reaction is a quinone + NADH + 5 H(+)(in) = a quinol + NAD(+) + 4 H(+)(out). Functionally, NDH-1 shuttles electrons from NADH, via FMN and iron-sulfur (Fe-S) centers, to quinones in the respiratory chain. The immediate electron acceptor for the enzyme in this species is believed to be ubiquinone. Couples the redox reaction to proton translocation (for every two electrons transferred, four hydrogen ions are translocated across the cytoplasmic membrane), and thus conserves the redox energy in a proton gradient. In Ruthia magnifica subsp. Calyptogena magnifica, this protein is NADH-quinone oxidoreductase subunit K.